A 186-amino-acid polypeptide reads, in one-letter code: Ribosome-recycling factor (186 aa).

The protein belongs to the RRF family.

It is found in the cytoplasm. In terms of biological role, responsible for the release of ribosomes from messenger RNA at the termination of protein biosynthesis. May increase the efficiency of translation by recycling ribosomes from one round of translation to another. The chain is Ribosome-recycling factor from Leptothrix cholodnii (strain ATCC 51168 / LMG 8142 / SP-6) (Leptothrix discophora (strain SP-6)).